Reading from the N-terminus, the 92-residue chain is MARSVWKGPFVDGYLLKKAETARGSTRAEVIKIWSRRSTILPQFVGLTFGVYNGQKHIPVYVTEEMVGHKFGEFSPTRTFHGHAADKKAKRR.

The protein belongs to the universal ribosomal protein uS19 family.

Its function is as follows. Protein S19 forms a complex with S13 that binds strongly to the 16S ribosomal RNA. In Methylobacterium sp. (strain 4-46), this protein is Small ribosomal subunit protein uS19.